A 172-amino-acid chain; its full sequence is Adenine phosphoribosyltransferase (172 aa).

The protein belongs to the purine/pyrimidine phosphoribosyltransferase family. In terms of assembly, homodimer.

It is found in the cytoplasm. The catalysed reaction is AMP + diphosphate = 5-phospho-alpha-D-ribose 1-diphosphate + adenine. Its pathway is purine metabolism; AMP biosynthesis via salvage pathway; AMP from adenine: step 1/1. Its function is as follows. Catalyzes a salvage reaction resulting in the formation of AMP, that is energically less costly than de novo synthesis. The polypeptide is Adenine phosphoribosyltransferase (Prochlorococcus marinus (strain SARG / CCMP1375 / SS120)).